We begin with the raw amino-acid sequence, 437 residues long: Kynureninase (437 aa).

Pyridoxal 5'-phosphate-binding positions include Leu99, Thr100, 127–130 (FPSD), Ser183, Asp212, His215, and Tyr237. The residue at position 238 (Lys238) is an N6-(pyridoxal phosphate)lysine. Residues Trp267 and Asn295 each coordinate pyridoxal 5'-phosphate.

The protein belongs to the kynureninase family. Homodimer. The cofactor is pyridoxal 5'-phosphate.

It localises to the cytoplasm. The catalysed reaction is L-kynurenine + H2O = anthranilate + L-alanine + H(+). It catalyses the reaction 3-hydroxy-L-kynurenine + H2O = 3-hydroxyanthranilate + L-alanine + H(+). It functions in the pathway amino-acid degradation; L-kynurenine degradation; L-alanine and anthranilate from L-kynurenine: step 1/1. Its pathway is cofactor biosynthesis; NAD(+) biosynthesis; quinolinate from L-kynurenine: step 2/3. Functionally, catalyzes the cleavage of L-kynurenine (L-Kyn) and L-3-hydroxykynurenine (L-3OHKyn) into anthranilic acid (AA) and 3-hydroxyanthranilic acid (3-OHAA), respectively. This is Kynureninase from Yarrowia lipolytica (strain CLIB 122 / E 150) (Yeast).